The sequence spans 330 residues: Virulence plasmid integrase pGP8-D (330 aa).

One can recognise a Core-binding (CB) domain in the interval 39–124 (FSLFEVIMHW…SYISLTRFLN (86 aa)). The region spanning 152 to 327 (VKTNAMNRLQ…SREDNASKKM (176 aa)) is the Tyr recombinase domain. Active-site residues include R189, K214, H279, R282, and H305. Y314 acts as the O-(3'-phospho-DNA)-tyrosine intermediate in catalysis.

It belongs to the 'phage' integrase family.

In Chlamydia muridarum (strain MoPn / Nigg), this protein is Virulence plasmid integrase pGP8-D.